We begin with the raw amino-acid sequence, 259 residues long: Putative hydro-lyase Rxyl_2409 (259 aa).

Residues Met-1–Gly-24 form a disordered region. The segment covering Glu-8–His-18 has biased composition (basic and acidic residues).

It belongs to the D-glutamate cyclase family.

This Rubrobacter xylanophilus (strain DSM 9941 / JCM 11954 / NBRC 16129 / PRD-1) protein is Putative hydro-lyase Rxyl_2409.